Consider the following 201-residue polypeptide: Retinol binding protein 4 (201 aa).

The signal sequence occupies residues 1–18 (MAWVWALVLLAALGSARA). Intrachain disulfides connect Cys-22/Cys-178, Cys-88/Cys-192, and Cys-138/Cys-147. Gln-116 contacts substrate. Arg-139 carries the omega-N-methylarginine modification.

The protein belongs to the calycin superfamily. Lipocalin family. As to quaternary structure, interacts with TTR. Interaction with TTR prevents its loss by filtration through the kidney glomeruli. Interacts with STRA6. In terms of tissue distribution, highly expressed in liver. Also expressed in adipose tissue. Expressed by endometrium from days 16-25 and by unattached chorioallantois from days 30-36 during pregnancy.

It is found in the secreted. In terms of biological role, retinol-binding protein that mediates retinol transport in blood plasma. Delivers retinol from the liver stores to the peripheral tissues. Transfers the bound all-trans retinol to STRA6, that then facilitates retinol transport across the cell membrane. This Felis catus (Cat) protein is Retinol binding protein 4.